We begin with the raw amino-acid sequence, 87 residues long: Defensin-like protein 81 (87 aa).

Positions 1 to 27 (MTIKKFLPLLLSSLMVYSLILLPIISG) are cleaved as a signal peptide. Cystine bridges form between Cys-33–Cys-69, Cys-37–Cys-57, Cys-43–Cys-67, and Cys-47–Cys-68.

The protein belongs to the DEFL family.

The protein resides in the secreted. This Arabidopsis thaliana (Mouse-ear cress) protein is Defensin-like protein 81.